We begin with the raw amino-acid sequence, 379 residues long: MYLEKLELKHFRNYEDVNVAFSPQVNVLIGKNAQGKTNLLESIYVLAMARSHRTSNDREMVTFKKDAALIRGEVHQRLGNTKLELLISRKGKKAKVNHLEKARLSQYIGQLNVILFAPEDLALVKGAPSVRRRFIDMEFGQIDALYLHTLTEYRAVLRQRNKYLKELQTKKATDKVYLEILSEQLSESGSQIIFKRLEFLQELEKYADKLHNQITQGKEHLQFQYESTLKEYQGKSVLELKQSLIEQYKTMMDKEIFQGTTLLGPHRDDVRFMLNDKNVQVYGSQGQQRTAALSVKLAEIDLMKEKTHEYPILLLDDVLSELDGARQTHLLKTIQNKVQTFLTTPGLSDVAQQLINKPKIFRIDNGKITEENSFTIEEE.

Gly-30–Thr-37 is a binding site for ATP.

It belongs to the RecF family.

The protein resides in the cytoplasm. The RecF protein is involved in DNA metabolism; it is required for DNA replication and normal SOS inducibility. RecF binds preferentially to single-stranded, linear DNA. It also seems to bind ATP. This is DNA replication and repair protein RecF from Ligilactobacillus salivarius (strain UCC118) (Lactobacillus salivarius).